We begin with the raw amino-acid sequence, 278 residues long: Dehydrogenase/reductase SDR family member 4 (278 aa).

NADP(+) is bound at residue 36-60 (LVTASTDGIGFAIARRLAQDGAHVV). Lys-92 bears the N6-acetyllysine; alternate mark. An N6-succinyllysine; alternate modification is found at Lys-92. Lys-105 is subject to N6-acetyllysine. A Phosphoserine modification is found at Ile-140. Ser-169 is a substrate binding site. Tyr-182 acts as the Proton acceptor in catalysis. NADP(+) is bound at residue Lys-186. Lys-216 carries the N6-acetyllysine; alternate modification. Lys-216 carries the post-translational modification N6-succinyllysine; alternate. Ser-220 is subject to Phosphoserine. N6-succinyllysine is present on residues Lys-227 and Lys-234. A Peroxisomal targeting signal motif is present at residues 276 to 278 (SRL).

The protein belongs to the short-chain dehydrogenases/reductases (SDR) family. In terms of assembly, homotetramer. In terms of tissue distribution, predominantly expressed in normal cervix (at protein level). As to expression, expressed in some neoplastic cervical tissues, but not in normal cervix (at protein level). Expressed in a few neoplastic cervical tissues. In terms of tissue distribution, high expression in liver.

It is found in the peroxisome. The protein localises to the nucleus. The catalysed reaction is a secondary alcohol + NADP(+) = a ketone + NADPH + H(+). The enzyme catalyses 3beta-hydroxy-5beta-pregnane-20-one + NADP(+) = 5beta-pregnan-3,20-dione + NADPH + H(+). It catalyses the reaction 5beta-dihydrotestosterone + NADPH + H(+) = 5beta-androstane-3beta,17beta-diol + NADP(+). It carries out the reaction 5beta-androstane-3,17-dione + NADPH + H(+) = 3beta-hydroxy-5beta-androstane-17-one + NADP(+). The catalysed reaction is isatin + NADPH + H(+) = 3-hydroxyindolin-2-one + NADP(+). The enzyme catalyses lithocholate + NADP(+) = 3-oxo-5beta-cholan-24-oate + NADPH + H(+). It catalyses the reaction 3-oxo-5beta-cholan-24-oate + NADPH + H(+) = isolithocholate + NADP(+). Its activity is regulated as follows. Inhibited by flavonoids (quercetin and genistein), cetylpyridium chloride, phenylhexane and valproic acid. Low inhibition is observed with fatty acids (myristic acid and lauric acid). No significant inhibition is observed with barbital, dicumarol, indomethacin, metyrapone, ethacrynic acid, disulfiram, hexestrol and benzodiazepines (diazepam and nitrazepam). Its function is as follows. NADPH-dependent oxidoreductase which catalyzes the reduction of a variety of compounds bearing carbonyl groups including ketosteroids, alpha-dicarbonyl compounds, aldehydes, aromatic ketones and quinones. Reduces 3-ketosteroids and benzil into 3beta-hydroxysteroids and R-benzoin, respectively, in contrast to the stereoselectivity of non-primate DHRS4s which produce 3alpha-hydroxysteroids and S-benzoin. Diplays low activity toward all-trans-retinal and no activity toward 9-cis-retinal as compared to non-primate mammals. In the reverse reaction, catalyze the NAD-dependent oxidation of 3beta-hydroxysteroids and alcohol, but with much lower efficiency. Involved in the metabolism of 3beta-hydroxysteroids, isatin and xenobiotic carbonyl compounds. In terms of biological role, no detected catalytic activity in vitro, possibly due to the lack of catalytic site. Functionally, NADPH-dependent oxidoreductase which catalyzes the reduction of a variety of compounds bearing carbonyl groups including ketosteroids, alpha-dicarbonyl compounds, aldehydes, aromatic ketones and quinones. Involved in the metabolism of 3beta-hydroxysteroids, isatin and xenobiotic carbonyl compounds. Has a higher catalytic activity for xenobiotic alpha-dicarbonyl compounds, sucha as benzil, than isoform 1 and is involved in benzil detoxification. This chain is Dehydrogenase/reductase SDR family member 4, found in Homo sapiens (Human).